Here is a 589-residue protein sequence, read N- to C-terminus: Deoxynucleoside triphosphate triphosphohydrolase SAMHD1 (589 aa).

Methionine 1 bears the N-acetylmethionine mark. The segment covering 1 to 10 (MQSADSQNTP) has biased composition (polar residues). The interval 1 to 41 (MQSADSQNTPKRPRRDGSPRTPPDSPLADAETSPSHDLDPD) is disordered. Serine 18 is modified (phosphoserine). A Phosphothreonine modification is found at threonine 21. Serine 33 and serine 88 each carry phosphoserine. One can recognise an SAM domain in the interval 45–100 (WGPEQVWSFLRRCGFSDSELLKRCREKRMSGSLLPFPEDLGISSHGKKMKLLNCIQ). Residues lysine 104 and valine 105 each coordinate GTP. Residue asparagine 107 participates in dGTP binding. GTP-binding residues include aspartate 125, glutamine 130, and arginine 133. Residues glutamine 137, leucine 138, valine 144, and arginine 152 each contribute to the dGTP site. Residue glutamine 137 participates in dATP binding. Glutamine 137 is a binding site for dCTP. Glutamine 137 is a dTTP binding site. Arginine 152 lines the dATP pocket. Arginine 152 is a dCTP binding site. Arginine 152 provides a ligand contact to dTTP. The 126-residue stretch at 152-277 (RFEHSLGVGY…IKDASKWLYK (126 aa)) folds into the HD domain. Histidine 155, histidine 194, and aspartate 195 together coordinate Mn(2+). The dATP site is built by histidine 198 and histidine 203. Residues histidine 198 and histidine 203 each contribute to the dCTP site. DTTP is bound by residues histidine 198 and histidine 203. Residue histidine 221 is part of the active site. Residue aspartate 300 coordinates Mn(2+). Positions 301, 304, 308, 322, 341, 343, 347, 355, 363, 364, 365, and 366 each coordinate dGTP. Lysine 301, tyrosine 304, and aspartate 308 together coordinate dATP. Residues lysine 301, tyrosine 304, and aspartate 308 each contribute to the dCTP site. 3 residues coordinate dTTP: lysine 301, tyrosine 304, and aspartate 308. Position 355 (arginine 355) interacts with dATP. Residue arginine 355 coordinates dCTP. Glutamine 364 is a binding site for dATP. Glutamine 364 is a binding site for dCTP. A dTTP-binding site is contributed by glutamine 364. Positions 440 and 444 each coordinate GTP. Lysine 457 is covalently cross-linked (Glycyl lysine isopeptide (Lys-Gly) (interchain with G-Cter in SUMO2)). Lysine 512 serves as a coordination point for GTP. Lysine 512 provides a ligand contact to dGTP.

This sequence belongs to the SAMHD1 family. Homodimer; in absence of GTP and dNTP. Homotetramer; in GTP- and dNTP-bound form. Interacts with MRE11; leading to stimulate the exonuclease activity of MRE11. Interacts with RBBP8/CtIP. Interacts (via its C-terminus) with CD81. The cofactor is Zn(2+).

It is found in the nucleus. The protein resides in the chromosome. The catalysed reaction is a 2'-deoxyribonucleoside 5'-triphosphate + H2O = a 2'-deoxyribonucleoside + triphosphate + H(+). It catalyses the reaction dATP + H2O = 2'-deoxyadenosine + triphosphate + H(+). The enzyme catalyses dCTP + H2O = 2'-deoxycytidine + triphosphate + H(+). It carries out the reaction dGTP + H2O = 2'-deoxyguanosine + triphosphate + H(+). The catalysed reaction is dTTP + H2O = thymidine + triphosphate + H(+). With respect to regulation, allosterically activated and regulated via the combined actions of GTP and dNTPs (dATP, dGTP, dTTP and dCTP): Allosteric site 1 binds GTP, while allosteric site 2 binds dNTP. Allosteric activation promotes the formation of highly active homotetramers. Its function is as follows. Protein that acts both as a host restriction factor involved in defense response to virus and as a regulator of DNA end resection at stalled replication forks. Has deoxynucleoside triphosphate (dNTPase) activity, which is required to restrict infection by viruses: dNTPase activity reduces cellular dNTP levels to levels too low for retroviral reverse transcription to occur, blocking early-stage virus replication in dendritic and other myeloid cells. Likewise, suppresses LINE-1 retrotransposon activity. In addition to virus restriction, dNTPase activity acts as a regulator of DNA precursor pools by regulating dNTP pools. Functions during S phase at stalled DNA replication forks to promote the resection of gapped or reversed forks: acts by stimulating the exonuclease activity of MRE11, activating the ATR-CHK1 pathway and allowing the forks to restart replication. Its ability to promote degradation of nascent DNA at stalled replication forks is required to prevent induction of type I interferons, thereby preventing chronic inflammation. Ability to promote DNA end resection at stalled replication forks is independent of dNTPase activity. Enhances immunoglobulin hypermutation in B-lymphocytes by promoting transversion mutation. The protein is Deoxynucleoside triphosphate triphosphohydrolase SAMHD1 of Bos taurus (Bovine).